The primary structure comprises 178 residues: Large ribosomal subunit protein uL6 (178 aa).

The protein belongs to the universal ribosomal protein uL6 family. In terms of assembly, part of the 50S ribosomal subunit.

This protein binds to the 23S rRNA, and is important in its secondary structure. It is located near the subunit interface in the base of the L7/L12 stalk, and near the tRNA binding site of the peptidyltransferase center. This chain is Large ribosomal subunit protein uL6, found in Streptococcus gordonii (strain Challis / ATCC 35105 / BCRC 15272 / CH1 / DL1 / V288).